Consider the following 146-residue polypeptide: Hemoglobin subunit beta-2 (146 aa).

One can recognise a Globin domain in the interval 2-146; the sequence is EWTDFERATI…VVSSLGRQYH (145 aa). Heme b-binding residues include histidine 63 and histidine 92.

It belongs to the globin family. Hb 2 is a heterotetramer of two alpha-2 and two beta-2 chains. Red blood cells.

Involved in oxygen transport from gills to the various peripheral tissues. This Gobionotothen gibberifrons (Humped rockcod) protein is Hemoglobin subunit beta-2 (hbb2).